Consider the following 1454-residue polypeptide: Coiled-coil domain-containing protein 18 (1454 aa).

S45 carries the post-translational modification Phosphoserine. 4 coiled-coil regions span residues 107-138 (APVD…HSLM), 170-402 (ILEE…ISQL), 438-464 (KLVI…NLTA), and 508-1309 (TMNK…SGHE). Residues 828-851 (QKQRESSAEKLRKMEEKCESAAHE) form a disordered region. S1355 bears the Phosphoserine mark.

It is found in the cytoplasm. The protein localises to the cytoskeleton. Its subcellular location is the microtubule organizing center. The protein resides in the centrosome. It localises to the centriolar satellite. This is Coiled-coil domain-containing protein 18 (CCDC18) from Homo sapiens (Human).